A 217-amino-acid chain; its full sequence is Carboxylesterase Culp1 (217 aa).

The first 32 residues, Met1–Ala32, serve as a signal peptide directing secretion. Cysteines 35 and 107 form a disulfide. Ser118 acts as the Nucleophile in catalysis. The cysteines at positions 177 and 184 are disulfide-linked. Residue Asp181 is part of the active site. Catalysis depends on His193, which acts as the Proton donor/acceptor.

It belongs to the cutinase family.

The protein resides in the secreted. It carries out the reaction a fatty acid ester + H2O = an aliphatic alcohol + a fatty acid + H(+). Shows esterase activity, with a preference for short- and medium-chain fatty acids. The sequence is that of Carboxylesterase Culp1 from Mycobacterium bovis (strain ATCC BAA-935 / AF2122/97).